The sequence spans 204 residues: Holliday junction branch migration complex subunit RuvA (204 aa).

The domain I stretch occupies residues 1–64 (MIGKLKGTID…EDQLKLFGFM (64 aa)). The segment at 65–143 (TALEREWFNL…AYAGEAINIA (79 aa)) is domain II. A flexible linker region spans residues 144-151 (LKRELGEG). The domain III stretch occupies residues 152–204 (VAAAPVADAVSALTNLGYSRDQAANAVAAAMKTAGEGADSAKLIRLGLKELAR).

It belongs to the RuvA family. In terms of assembly, homotetramer. Forms an RuvA(8)-RuvB(12)-Holliday junction (HJ) complex. HJ DNA is sandwiched between 2 RuvA tetramers; dsDNA enters through RuvA and exits via RuvB. An RuvB hexamer assembles on each DNA strand where it exits the tetramer. Each RuvB hexamer is contacted by two RuvA subunits (via domain III) on 2 adjacent RuvB subunits; this complex drives branch migration. In the full resolvosome a probable DNA-RuvA(4)-RuvB(12)-RuvC(2) complex forms which resolves the HJ.

Its subcellular location is the cytoplasm. In terms of biological role, the RuvA-RuvB-RuvC complex processes Holliday junction (HJ) DNA during genetic recombination and DNA repair, while the RuvA-RuvB complex plays an important role in the rescue of blocked DNA replication forks via replication fork reversal (RFR). RuvA specifically binds to HJ cruciform DNA, conferring on it an open structure. The RuvB hexamer acts as an ATP-dependent pump, pulling dsDNA into and through the RuvAB complex. HJ branch migration allows RuvC to scan DNA until it finds its consensus sequence, where it cleaves and resolves the cruciform DNA. The sequence is that of Holliday junction branch migration complex subunit RuvA from Rhizobium etli (strain ATCC 51251 / DSM 11541 / JCM 21823 / NBRC 15573 / CFN 42).